The primary structure comprises 96 residues: Uteroglobin (96 aa).

The N-terminal stretch at 1–19 is a signal peptide; it reads MKIAITITVLMLSICCSSA.

Belongs to the secretoglobin family. As to quaternary structure, antiparallel homodimer; disulfide-linked. Interaction with LMBR1L is controversial. In terms of tissue distribution, club cells (nonciliated cells of the surface epithelium of the pulmonary airways).

Its subcellular location is the secreted. Functionally, binds phosphatidylcholine, phosphatidylinositol, polychlorinated biphenyls (PCB) and weakly progesterone, potent inhibitor of phospholipase A2. In Rattus norvegicus (Rat), this protein is Uteroglobin (Scgb1a1).